We begin with the raw amino-acid sequence, 141 residues long: Galactose-6-phosphate isomerase subunit LacA (141 aa).

Belongs to the LacAB/RpiB family. As to quaternary structure, heteromultimeric protein consisting of LacA and LacB.

The enzyme catalyses aldehydo-D-galactose 6-phosphate = keto-D-tagatose 6-phosphate. Its pathway is carbohydrate metabolism; D-galactose 6-phosphate degradation; D-tagatose 6-phosphate from D-galactose 6-phosphate: step 1/1. This Streptococcus agalactiae serotype Ia (strain ATCC 27591 / A909 / CDC SS700) protein is Galactose-6-phosphate isomerase subunit LacA.